The chain runs to 261 residues: MEKRIELERRARKVNQITELNLDNCRSTSIVGLTDEYTALESLSLINVGLTTLKGFPKLPNLKKLELSDNRISSGLNYLTTSPKLQYLNLSGNKIKDLETLKPLEEFKNLVVLDLFNNDATQVDNYREKIFKMLPSLNFLDGFDCNDEEVQSDGDDDDEVNGNDSDEVGVSDEDDDSDDSDEEANGEVSLSEVYNDDLEEDNSDWEGEDEAGEEDEEEDSDIDDADGDANESAASVNAKDKDGEKEADESQVRGKKRKHDG.

LRR repeat units lie at residues 16-37 (QITE…TDEY), 39-60 (ALES…PKLP), 61-83 (NLKK…TTSP), and 84-105 (KLQY…KPLE). Residues 118–156 (NDATQVDNYREKIFKMLPSLNFLDGFDCNDEEVQSDGDD) enclose the LRRCT domain. Composition is skewed to acidic residues over residues 145-185 (CNDE…EEAN) and 194-229 (YNDD…DGDA). The disordered stretch occupies residues 145 to 261 (CNDEEVQSDG…VRGKKRKHDG (117 aa)). Positions 238–252 (AKDKDGEKEADESQV) are enriched in basic and acidic residues.

This sequence belongs to the ANP32 family. In terms of processing, phosphorylated on serine residues.

Its subcellular location is the nucleus. It is found in the cytoplasm. Implicated in a number of cellular processes, including proliferation, differentiation, caspase-dependent and caspase-independent apoptosis, suppression of transformation (tumor suppressor), inhibition of protein phosphatase 2A, regulation of mRNA trafficking and stability, and inhibition of acetyltransferases as part of the INHAT (inhibitor of histone acetyltransferases) complex. The protein is Acidic leucine-rich nuclear phosphoprotein 32 family member A (Anp32a) of Drosophila melanogaster (Fruit fly).